The chain runs to 81 residues: Sulfur carrier protein TusA (81 aa).

Cysteine 19 serves as the catalytic Cysteine persulfide intermediate.

The protein belongs to the sulfur carrier protein TusA family. In terms of assembly, interacts with IscS.

Its subcellular location is the cytoplasm. It participates in tRNA modification. In terms of biological role, sulfur carrier protein involved in sulfur trafficking in the cell. Part of a sulfur-relay system required for 2-thiolation during synthesis of 2-thiouridine of the modified wobble base 5-methylaminomethyl-2-thiouridine (mnm(5)s(2)U) in tRNA. Interacts with IscS and stimulates its cysteine desulfurase activity. Accepts an activated sulfur from IscS, which is then transferred to TusD, and thus determines the direction of sulfur flow from IscS to 2-thiouridine formation. Also appears to be involved in sulfur transfer for the biosynthesis of molybdopterin. This is Sulfur carrier protein TusA from Erwinia tasmaniensis (strain DSM 17950 / CFBP 7177 / CIP 109463 / NCPPB 4357 / Et1/99).